Reading from the N-terminus, the 287-residue chain is Pyridoxal kinase PdxY (287 aa).

Residues Ser-10 and 45-46 contribute to the substrate site; that span reads TQ. ATP-binding positions include Asp-112, Ala-144, Glu-149, Lys-182, and 209 to 212; that span reads RPLV. Asp-224 provides a ligand contact to substrate.

The protein belongs to the pyridoxine kinase family. PdxY subfamily. In terms of assembly, homodimer. Mg(2+) serves as cofactor.

It catalyses the reaction pyridoxal + ATP = pyridoxal 5'-phosphate + ADP + H(+). The protein operates within cofactor metabolism; pyridoxal 5'-phosphate salvage; pyridoxal 5'-phosphate from pyridoxal: step 1/1. In terms of biological role, pyridoxal kinase involved in the salvage pathway of pyridoxal 5'-phosphate (PLP). Catalyzes the phosphorylation of pyridoxal to PLP. This is Pyridoxal kinase PdxY from Shigella flexneri.